Consider the following 1710-residue polypeptide: Phosphatidylinositol 4-phosphate 5-kinase (1710 aa).

Residues 68–98 (YKSIFKAFDLNNDNYLDFYEFCVAINIMLKG) form the EF-hand domain. Ca(2+) is bound by residues D76, N78, D80, Y82, and E87. Disordered stretches follow at residues 139–255 (NNMN…DPIN), 427–479 (KQKK…IKSV), and 895–993 (GEGH…HNNN). Residues 140–235 (NMNGDNINGD…HNNNSHNNNN (96 aa)) are compositionally biased toward low complexity. Positions 236-248 (KAENSLGQPLNEK) are enriched in polar residues. The segment covering 427-444 (KQKKKKKKKKKKKKKKEK) has biased composition (basic residues). The span at 456-468 (SSSMENKSQNKSQ) shows a compositional bias: low complexity. Residues 902–973 (EEEEKNDDEE…DDNDDNDDND (72 aa)) are compositionally biased toward acidic residues. Residues 974–987 (EKSNIKIENKKDVP) are compositionally biased toward basic and acidic residues. The region spanning 1334–1709 (QKKTFHRILA…RFVTFIENHM (376 aa)) is the PIPK domain.

It carries out the reaction a 1,2-diacyl-sn-glycero-3-phospho-(1D-myo-inositol 4-phosphate) + ATP = a 1,2-diacyl-sn-glycero-3-phospho-(1D-myo-inositol-4,5-bisphosphate) + ADP + H(+). With respect to regulation, catalytic activity is increase by myristoylated ARF1. Phosphatidic acid has no effect on catalytic activity. Functionally, catalyzes the phosphorylation of phosphatidylinositol 4-phosphate (PtdIns(4)P/PI4P) to form phosphatidylinositol 4,5-bisphosphate (PtdIns(4,5)P2/PIP2), a lipid second messenger that regulates several cellular processes. The protein is Phosphatidylinositol 4-phosphate 5-kinase of Plasmodium falciparum (isolate 3D7).